A 174-amino-acid chain; its full sequence is I-Kappa-B like protein C1 (174 aa).

2 ANK repeats span residues 56-88 (RGRQ…DINA) and 93-123 (TGNS…NLGA).

The protein belongs to the polydnaviridae I-Kappa-B-like protein family.

Functionally, suppresses the host immune response through NF-kappa-B inactivation. Possesses ankyrin repeat domains required for NF-kappa-B binding but lacks the regulatory regions required for dissociation from NF-kappa-B and degradation. Therefore, prevents host NF-kappa-B release and subsequent activation. This chain is I-Kappa-B like protein C1 (C1), found in Microplitis demolitor bracovirus (isolate Webb) (MdBV).